The chain runs to 484 residues: MPSEPSAPLPQPLPPDGGWGWVVVCASFISIGFSYAFPKAVTVFFKDIQEIFNTTSSQIAWISSIMLAVMYAGGPISSVLVNNYGSRPVVIVGGLLCCIGMILASYSNSVIELYLTVGFIGGLGLAFNLQPALTIIGKYFYRRRPLANGCAMAGSPVFLSTLAPFNQYLFNNYGWKGSFLILGGIFLHSCVAGCLMRPVGPSPNTKKSKSKVGSRHDSTLKKASKVSTAQKVNRFLDFSLFMHRGFLIYLSGNVILFLGIFAPIIFLAQYAKHIGVDDYNSAFLLSVMAFIDMFARPSVGLIANTSLIRPRIQYLFSSAIIFTGICHLLCPLATTYSALVVYVVFFGLGFGSISSLLFECLMDIVGATRFSSAVGLTTIVECCPVLFGPPLAGKLLDITGEYKYLYIASGTVVLVSGTYLLIGNAINYRLLDKERKREKAKKKKSASHASREMEALNRSKQDEVTVKASNAHNPPSDRDKESNI.

Topologically, residues 1-16 (MPSEPSAPLPQPLPPD) are cytoplasmic. Residues 17–37 (GGWGWVVVCASFISIGFSYAF) form a helical membrane-spanning segment. Topologically, residues 38–60 (PKAVTVFFKDIQEIFNTTSSQIA) are extracellular. A helical membrane pass occupies residues 61 to 81 (WISSIMLAVMYAGGPISSVLV). The Cytoplasmic segment spans residues 82-90 (NNYGSRPVV). A helical transmembrane segment spans residues 91–111 (IVGGLLCCIGMILASYSNSVI). Over 112–116 (ELYLT) the chain is Extracellular. The chain crosses the membrane as a helical span at residues 117-137 (VGFIGGLGLAFNLQPALTIIG). The Cytoplasmic segment spans residues 138–149 (KYFYRRRPLANG). The chain crosses the membrane as a helical span at residues 150 to 170 (CAMAGSPVFLSTLAPFNQYLF). Residues 171 to 174 (NNYG) are Extracellular-facing. The chain crosses the membrane as a helical span at residues 175–195 (WKGSFLILGGIFLHSCVAGCL). Over 196 to 245 (MRPVGPSPNTKKSKSKVGSRHDSTLKKASKVSTAQKVNRFLDFSLFMHRG) the chain is Cytoplasmic. A helical transmembrane segment spans residues 246-266 (FLIYLSGNVILFLGIFAPIIF). Over 267-281 (LAQYAKHIGVDDYNS) the chain is Extracellular. Residues 282 to 302 (AFLLSVMAFIDMFARPSVGLI) form a helical membrane-spanning segment. Residues 303 to 311 (ANTSLIRPR) lie on the Cytoplasmic side of the membrane. A helical membrane pass occupies residues 312 to 332 (IQYLFSSAIIFTGICHLLCPL). Residues 333-337 (ATTYS) are Extracellular-facing. Residues 338 to 358 (ALVVYVVFFGLGFGSISSLLF) form a helical membrane-spanning segment. Topologically, residues 359-372 (ECLMDIVGATRFSS) are cytoplasmic. The chain crosses the membrane as a helical span at residues 373–393 (AVGLTTIVECCPVLFGPPLAG). Residues 394 to 405 (KLLDITGEYKYL) are Extracellular-facing. Residues 406–426 (YIASGTVVLVSGTYLLIGNAI) traverse the membrane as a helical segment. Residues 427 to 484 (NYRLLDKERKREKAKKKKSASHASREMEALNRSKQDEVTVKASNAHNPPSDRDKESNI) are Cytoplasmic-facing. Positions 438–484 (EKAKKKKSASHASREMEALNRSKQDEVTVKASNAHNPPSDRDKESNI) are disordered. 2 stretches are compositionally biased toward basic and acidic residues: residues 449-465 (ASRE…DEVT) and 475-484 (PSDRDKESNI).

The protein belongs to the major facilitator superfamily. Monocarboxylate porter (TC 2.A.1.13) family. As to quaternary structure, homodimer. Interacts with GRID2IP. Interacts with EMB; interaction mediates SLC16A7 targeting to the plasma membrane. Interacts with isoform 2 of BSG. Detected in testis and in spermatozoa (at protein level).

It is found in the cell membrane. The protein resides in the cytoplasm. It localises to the basolateral cell membrane. The enzyme catalyses (S)-lactate(in) + H(+)(in) = (S)-lactate(out) + H(+)(out). It carries out the reaction 3-methyl-2-oxobutanoate(out) + H(+)(out) = 3-methyl-2-oxobutanoate(in) + H(+)(in). It catalyses the reaction acetoacetate(out) + H(+)(out) = acetoacetate(in) + H(+)(in). The catalysed reaction is (R)-3-hydroxybutanoate(out) + H(+)(out) = (R)-3-hydroxybutanoate(in) + H(+)(in). The enzyme catalyses 4-methyl-2-oxopentanoate(out) + H(+)(out) = 4-methyl-2-oxopentanoate(in) + H(+)(in). It carries out the reaction pyruvate(out) + H(+)(out) = pyruvate(in) + H(+)(in). It catalyses the reaction (S)-3-hydroxybutanoate(out) + H(+)(out) = (S)-3-hydroxybutanoate(in) + H(+)(in). Transport activity exhibits steep dependence on substrate concentration. Substrate concentration sensitivity of SLC16A7 arises from the strong inter-subunit cooperativity of the SLC16A7 dimer during transport. Inhibited by AR-C155858. Its function is as follows. Proton-coupled monocarboxylate symporter. Catalyzes the rapid transport across the plasma membrane of monocarboxylates such as L-lactate, pyruvate and ketone bodies, acetoacetate, beta-hydroxybutyrate and acetate. Dimerization is functionally required and both subunits work cooperatively in transporting substrate. The protein is Monocarboxylate transporter 2 (Slc16a7) of Mus musculus (Mouse).